Reading from the N-terminus, the 130-residue chain is T-cell receptor beta chain V region A20.2.25 (130 aa).

Positions 1-21 (MSCRLLLYVSLCLVETALMNT) are cleaved as a signal peptide. Residues 22–112 (KITQSPRYLI…DSAVYFCASS (91 aa)) are v segment. Residues Asn-36 and Asn-75 are each glycosylated (N-linked (GlcNAc...) asparagine). The d segment stretch occupies residues 113–115 (HGE). The j segment stretch occupies residues 116-130 (NTEVFFGKGTTLTVV).

The polypeptide is T-cell receptor beta chain V region A20.2.25 (Mus musculus (Mouse)).